Reading from the N-terminus, the 1536-residue chain is Glycogen debranching enzyme (1536 aa).

Active-site residues include Asp-535, His-538, and Asp-670.

This sequence belongs to the glycogen debranching enzyme family. As to quaternary structure, interacts with IGD1.

It localises to the mitochondrion. The protein localises to the cytoplasm. The enzyme catalyses Transfers a segment of a (1-&gt;4)-alpha-D-glucan to a new position in an acceptor, which may be glucose or a (1-&gt;4)-alpha-D-glucan.. The catalysed reaction is Hydrolysis of (1-&gt;6)-alpha-D-glucosidic branch linkages in glycogen phosphorylase limit dextrin.. With respect to regulation, activity is inhibited by IGD1. In terms of biological role, multifunctional enzyme acting as 1,4-alpha-D-glucan:1,4-alpha-D-glucan 4-alpha-D-glycosyltransferase and amylo-1,6-glucosidase in glycogen degradation. The sequence is that of Glycogen debranching enzyme (GDB1) from Saccharomyces cerevisiae (strain ATCC 204508 / S288c) (Baker's yeast).